The sequence spans 331 residues: UPF0194 membrane protein YbhG (331 aa).

A signal peptide spans 1–15; that stretch reads MKKPVVIGLAVVVLA. Residues 107 to 208 are a coiled coil; it reads EEIAQAAAAV…LNLQDSTLIA (102 aa).

It belongs to the UPF0194 family.

It localises to the periplasm. In Escherichia coli O157:H7 (strain EC4115 / EHEC), this protein is UPF0194 membrane protein YbhG.